We begin with the raw amino-acid sequence, 218 residues long: Ribose-5-phosphate isomerase A (218 aa).

Substrate-binding positions include 28 to 31 (TGST), 81 to 84 (DGAD), and 94 to 97 (KGGG). The active-site Proton acceptor is E103. K121 provides a ligand contact to substrate.

It belongs to the ribose 5-phosphate isomerase family. In terms of assembly, homodimer.

The catalysed reaction is aldehydo-D-ribose 5-phosphate = D-ribulose 5-phosphate. It functions in the pathway carbohydrate degradation; pentose phosphate pathway; D-ribose 5-phosphate from D-ribulose 5-phosphate (non-oxidative stage): step 1/1. Catalyzes the reversible conversion of ribose-5-phosphate to ribulose 5-phosphate. The sequence is that of Ribose-5-phosphate isomerase A from Vibrio vulnificus (strain CMCP6).